Reading from the N-terminus, the 245-residue chain is Orotidine 5'-phosphate decarboxylase (245 aa).

Substrate contacts are provided by residues D22, K44, 71-80, T131, R192, Q201, G221, and R222; that span reads DLKFHDIPNT. The active-site Proton donor is the K73.

Belongs to the OMP decarboxylase family. Type 1 subfamily. As to quaternary structure, homodimer.

It catalyses the reaction orotidine 5'-phosphate + H(+) = UMP + CO2. The protein operates within pyrimidine metabolism; UMP biosynthesis via de novo pathway; UMP from orotate: step 2/2. Catalyzes the decarboxylation of orotidine 5'-monophosphate (OMP) to uridine 5'-monophosphate (UMP). The sequence is that of Orotidine 5'-phosphate decarboxylase from Escherichia coli O139:H28 (strain E24377A / ETEC).